The sequence spans 224 residues: Urease accessory protein UreF (224 aa).

Belongs to the UreF family. In terms of assembly, ureD, UreF and UreG form a complex that acts as a GTP-hydrolysis-dependent molecular chaperone, activating the urease apoprotein by helping to assemble the nickel containing metallocenter of UreC. The UreE protein probably delivers the nickel.

The protein resides in the cytoplasm. Required for maturation of urease via the functional incorporation of the urease nickel metallocenter. The polypeptide is Urease accessory protein UreF (Escherichia coli O157:H7).